We begin with the raw amino-acid sequence, 638 residues long: Chaperone protein DnaK (638 aa).

Position 200 is a phosphothreonine; by autocatalysis (threonine 200). Residues 599–623 (LHMAATAEQQSASTGAGAGSSAKVD) are disordered. The segment covering 609-620 (SASTGAGAGSSA) has biased composition (low complexity).

Belongs to the heat shock protein 70 family.

Acts as a chaperone. The polypeptide is Chaperone protein DnaK (Xylella fastidiosa (strain M12)).